The following is a 764-amino-acid chain: Molybdenum cofactor sulfurase 1 (764 aa).

Position 228 is an N6-(pyridoxal phosphate)lysine (lysine 228). Cysteine 394 is an active-site residue. The region spanning 607–762 is the MOSC domain; the sequence is LRLLKQSDEE…LYCNSVVEGL (156 aa).

It belongs to the class-V pyridoxal-phosphate-dependent aminotransferase family. MOCOS subfamily. Pyridoxal 5'-phosphate is required as a cofactor.

It carries out the reaction Mo-molybdopterin + L-cysteine + AH2 = thio-Mo-molybdopterin + L-alanine + A + H2O. Functionally, sulfurates the molybdenum cofactor. Sulfation of molybdenum is essential for xanthine dehydrogenase (XDH) and aldehyde oxidase (ADO) enzymes in which molybdenum cofactor is liganded by 1 oxygen and 1 sulfur atom in active form. In Aedes aegypti (Yellowfever mosquito), this protein is Molybdenum cofactor sulfurase 1.